The primary structure comprises 484 residues: tRNA-2-methylthio-N(6)-dimethylallyladenosine synthase (484 aa).

Positions 29-149 (GVFHIHTLGC…LPKLLDQNRA (121 aa)) constitute an MTTase N-terminal domain. Residues C38, C78, C112, C186, C190, and C193 each coordinate [4Fe-4S] cluster. The Radical SAM core domain occupies 172–401 (RASRISSWVA…VALQEQITEE (230 aa)). The TRAM domain maps to 404–474 (ATFEGRDVEV…RHNLLADPDV (71 aa)).

It belongs to the methylthiotransferase family. MiaB subfamily. As to quaternary structure, monomer. The cofactor is [4Fe-4S] cluster.

Its subcellular location is the cytoplasm. It catalyses the reaction N(6)-dimethylallyladenosine(37) in tRNA + (sulfur carrier)-SH + AH2 + 2 S-adenosyl-L-methionine = 2-methylsulfanyl-N(6)-dimethylallyladenosine(37) in tRNA + (sulfur carrier)-H + 5'-deoxyadenosine + L-methionine + A + S-adenosyl-L-homocysteine + 2 H(+). Functionally, catalyzes the methylthiolation of N6-(dimethylallyl)adenosine (i(6)A), leading to the formation of 2-methylthio-N6-(dimethylallyl)adenosine (ms(2)i(6)A) at position 37 in tRNAs that read codons beginning with uridine. This Bifidobacterium longum (strain DJO10A) protein is tRNA-2-methylthio-N(6)-dimethylallyladenosine synthase.